We begin with the raw amino-acid sequence, 1821 residues long: Latent-transforming growth factor beta-binding protein 2 (1821 aa).

Residues 1–35 form the signal peptide; that stretch reads MRPRTKARSPGRALRNPWRGFLPLTLALFVGAGHA. 2 disordered regions span residues 38–58 and 81–165; these read DPVG…RPGG and GLQP…RLTG. The segment at 94–115 is heparin-binding; sequence SPRRPTEAEARRPSRAQQSRRV. 2 stretches are compositionally biased toward low complexity: residues 108 to 120 and 129 to 145; these read RAQQ…PPAQ and QQQP…LPRL. N-linked (GlcNAc...) asparagine glycosylation is present at Asn-181. Residues 187-219 form the EGF-like 1 domain; the sequence is IKPVCEPPCQNRGSCSRPQLCVCRSGFRGARCE. 3 cysteine pairs are disulfide-bonded: Cys-191-Cys-201, Cys-195-Cys-207, and Cys-209-Cys-218. The tract at residues 229–339 is disordered; sequence PQNSRLAPRR…AVPLEHPSSP (111 aa). A heparin-binding region spans residues 232 to 249; the sequence is SRLAPRRWAERSPNLRRS. Residues 262-274 show a composition bias toward pro residues; sequence PPAPQSPPAPQSP. 2 stretches are compositionally biased toward polar residues: residues 280–292 and 304–314; these read SGLS…QQHV and ATASSQLSSNA. Asn-343 carries an N-linked (GlcNAc...) asparagine glycan. 344–354 provides a ligand contact to heparin; it reads LTEKIKKIKIV. The Cell attachment site signature appears at 375–377; sequence RGD. The 33-residue stretch at 396 to 428 folds into the EGF-like 2 domain; it reads RIYFCQIPCLNGGRCIGRDECWCPANSTGKFCH. Intrachain disulfides connect Cys-400–Cys-410, Cys-404–Cys-416, and Cys-418–Cys-427. Asn-421 carries N-linked (GlcNAc...) asparagine glycosylation. Ser-506 is subject to Phosphoserine. Residues 510-544 are disordered; it reads RPPPWLPASPGHSLWDSNNIPARSGEPPRPLPPAA. In terms of domain architecture, TB 1 spans 552-604; the sequence is GRCYLNTVNGQCANPLLELTTQEDCCGSVGAFWGVTLCAPCPPRPASPVIENG. Cystine bridges form between Cys-554-Cys-576, Cys-563-Cys-589, and Cys-577-Cys-592. Asn-616 carries N-linked (GlcNAc...) asparagine glycosylation. The region spanning 622-662 is the EGF-like 3; calcium-binding domain; it reads DINECLTLGLCKDAECVNTRGSYLCTCRPGLMLDPSRSRCV. 7 cysteine pairs are disulfide-bonded: Cys-626/Cys-637, Cys-632/Cys-646, Cys-648/Cys-661, Cys-674/Cys-696, Cys-683/Cys-709, Cys-697/Cys-712, and Cys-698/Cys-724. The region spanning 672–724 is the TB 2 domain; it reads GLCYRSLGPGTCTLPLAQRITKQICCCSRVGKAWGSECEKCPLPGTEAFREIC. The span at 744–757 shows a compositional bias: basic and acidic residues; the sequence is AEEEELARPPREQG. The segment at 744–772 is disordered; it reads AEEEELARPPREQGQRSSGALPGPAERQP. Asn-811 is a glycosylation site (N-linked (GlcNAc...) asparagine). The 43-residue stretch at 844–886 folds into the EGF-like 4 domain; it reads GIDRCAAGATNVCGPGTCVNLPDGYRCVCSPGYQLHPSQAYCT. 49 cysteine pairs are disulfide-bonded: Cys-848-Cys-861, Cys-856-Cys-870, Cys-872-Cys-885, Cys-891-Cys-902, Cys-896-Cys-911, Cys-913-Cys-928, Cys-934-Cys-945, Cys-940-Cys-954, Cys-956-Cys-968, Cys-974-Cys-985, Cys-980-Cys-994, Cys-997-Cys-1008, Cys-1014-Cys-1025, Cys-1020-Cys-1034, Cys-1036-Cys-1049, Cys-1055-Cys-1066, Cys-1061-Cys-1075, Cys-1078-Cys-1091, Cys-1097-Cys-1108, Cys-1103-Cys-1117, Cys-1120-Cys-1133, Cys-1139-Cys-1151, Cys-1146-Cys-1160, Cys-1162-Cys-1174, Cys-1180-Cys-1192, Cys-1186-Cys-1201, Cys-1203-Cys-1216, Cys-1222-Cys-1233, Cys-1228-Cys-1242, Cys-1244-Cys-1257, Cys-1263-Cys-1276, Cys-1271-Cys-1285, Cys-1289-Cys-1301, Cys-1307-Cys-1319, Cys-1313-Cys-1328, Cys-1330-Cys-1343, Cys-1349-Cys-1361, Cys-1356-Cys-1370, Cys-1372-Cys-1386, Cys-1413-Cys-1436, Cys-1423-Cys-1448, Cys-1437-Cys-1451, Cys-1438-Cys-1463, Cys-1489-Cys-1502, Cys-1497-Cys-1511, Cys-1513-Cys-1526, Cys-1532-Cys-1542, Cys-1537-Cys-1551, and Cys-1553-Cys-1566. One can recognise an EGF-like 5; calcium-binding domain in the interval 887–929; that stretch reads DDNECLRDPCKGKGRCINRVGSYSCFCYPGYTLATSGATQECQ. In terms of domain architecture, EGF-like 6; calcium-binding spans 930–969; the sequence is DINECEQPGVCSGGQCTNTEGSYHCECDQGYIMVRKGHCQ. Positions 970-1009 constitute an EGF-like 7; calcium-binding domain; it reads DINECRHPGTCPDGRCVNSPGSYTCLACEEGYRGQSGSCV. In terms of domain architecture, EGF-like 8; calcium-binding spans 1010-1050; it reads DVNECLTPGVCAHGKCTNLEGSFRCSCEQGYEVTSDEKGCQ. In terms of domain architecture, EGF-like 9; calcium-binding spans 1051–1092; the sequence is DVDECASRASCPTGLCLNTEGSFACSACENGYWVNEDGTACE. The EGF-like 10; calcium-binding domain occupies 1093–1134; the sequence is DLDECAFPGVCPSGVCTNTAGSFSCKDCDGGYRPSPLGDSCE. In terms of domain architecture, EGF-like 11; calcium-binding spans 1135-1175; sequence DVDECEDPQSSCLGGECKNTVGSYQCLCPQGFQLANGTVCE. Asn-1170 carries N-linked (GlcNAc...) asparagine glycosylation. In terms of domain architecture, EGF-like 12; calcium-binding spans 1176–1217; that stretch reads DVNECMGEEHCAPHGECLNSHGSFFCLCAPGFVSAEGGTSCQ. The EGF-like 13; calcium-binding domain maps to 1218 to 1258; it reads DVDECATTDPCVGGHCVNTEGSFNCLCETGFQPSPESGECV. In terms of domain architecture, EGF-like 14; calcium-binding spans 1259 to 1302; the sequence is DIDECEDYGDPVCGTWKCENSPGSYRCVLGCQPGFHMAPNGDCI. The 42-residue stretch at 1303–1344 folds into the EGF-like 15; calcium-binding domain; sequence DIDECANDTMCGSHGFCDNTDGSFRCLCDQGFEISPSGWDCV. Asn-1309 carries an N-linked (GlcNAc...) asparagine glycan. One can recognise an EGF-like 16; calcium-binding domain in the interval 1345-1387; it reads DVNECELMLAVCGAALCENVEGSFLCLCASDLEEYDAQEGHCR. A TB 3 domain is found at 1411–1463; it reads MDCYSGQKGHAPCSSVLGRNTTQAECCCTQGASWGDACDLCPSEDSAEFSEIC. N-linked (GlcNAc...) asparagine glycosylation occurs at Asn-1430. The EGF-like 17; calcium-binding domain occupies 1485–1527; sequence DADECVIFGPGLCPNGRCLNTVPGYVCLCNPGFHYDASHKKCE. The 40-residue stretch at 1528 to 1567 folds into the EGF-like 18; calcium-binding domain; that stretch reads DHDECQDLACENGECVNTEGSFHCFCSPPLTLDLSQQRCM. Residue Asn-1568 is glycosylated (N-linked (GlcNAc...) asparagine). The TB 4 domain occupies 1584–1636; it reads DICWKKVTNDVCSEPLRGHRTTYTECCCQDGEAWSQQCALCPPRSSEVYAQLC. 10 disulfides stabilise this stretch: Cys-1586–Cys-1609, Cys-1595–Cys-1621, Cys-1610–Cys-1624, Cys-1611–Cys-1636, Cys-1737–Cys-1748, Cys-1743–Cys-1757, Cys-1759–Cys-1772, Cys-1778–Cys-1793, Cys-1788–Cys-1802, and Cys-1804–Cys-1817. The segment at 1639 to 1821 is C-terminal domain; that stretch reads ARIEAEREAG…AGPPHCTAKE (183 aa). The EGF-like 19; calcium-binding domain maps to 1733 to 1773; the sequence is QAEECGILNGCENGRCVRVREGYTCDCFEGFQLDAAHMACV. In terms of domain architecture, EGF-like 20; calcium-binding spans 1774–1818; that stretch reads DVNECDDLNGPAVLCVHGYCENTEGSYRCHCSPGYVAEAGPPHCT.

The protein belongs to the LTBP family. In terms of assembly, forms part of the large latent transforming growth factor beta precursor complex; removal is essential for activation of complex. Interacts with SDC4. Interacts (via C-terminal domain) with FBN1 (via N-terminal domain) in a Ca(+2)-dependent manner. In terms of processing, N-Glycosylated. Contains hydroxylated asparagine residues. Expressed in the aorta (at protein level). Expressed in lung, weakly expressed in heart, placenta, liver and skeletal muscle.

The protein localises to the secreted. The protein resides in the extracellular space. It localises to the extracellular matrix. Its function is as follows. May play an integral structural role in elastic-fiber architectural organization and/or assembly. The sequence is that of Latent-transforming growth factor beta-binding protein 2 (LTBP2) from Homo sapiens (Human).